Consider the following 89-residue polypeptide: Cell division topological specificity factor (89 aa).

Belongs to the MinE family.

Its function is as follows. Prevents the cell division inhibition by proteins MinC and MinD at internal division sites while permitting inhibition at polar sites. This ensures cell division at the proper site by restricting the formation of a division septum at the midpoint of the long axis of the cell. The protein is Cell division topological specificity factor of Proteus mirabilis (strain HI4320).